The primary structure comprises 244 residues: MTAGAAPRILKHQVVRAELDRMLDGMRIGDPFPAEREIAEQFEVARETVRQALRELLIDGRVERRGRTTVVARPKIRQPLGMGSYTEAAKAQGLSAGRILVAWSDLTADEVLAGVLGVDVGAPVLQLERVLTTDGVRVGLETTKLPAQRYPGLRETFDHEASLYAEIRSRGIAFTRTVDTIDTALPDAREAALLGADARTPMFLLNRVSYDQDDVAIEQRRSLYRGDRMTFTAVMHAKNSAIVS.

An HTH gntR-type domain is found at 8–74 (RILKHQVVRA…RGRTTVVARP (67 aa)). A DNA-binding region (H-T-H motif) is located at residues 35–54 (EREIAEQFEVARETVRQALR).

It localises to the cytoplasm. In terms of biological role, represses the phnDCE operon, involved in the uptake of phosphate, under conditions of phosphate availability in the cell. The chain is HTH-type transcriptional repressor PhnF (phnF) from Mycolicibacterium smegmatis (strain ATCC 700084 / mc(2)155) (Mycobacterium smegmatis).